The chain runs to 115 residues: V-type proton ATPase subunit G (115 aa).

It belongs to the V-ATPase G subunit family. V-ATPase is a heteromultimeric enzyme composed of a peripheral catalytic V1 complex (components A to H) attached to an integral membrane V0 proton pore complex (components: a, c, c', c'', d, e, f and VOA1).

The protein localises to the vacuole membrane. Its function is as follows. Subunit of the V1 complex of vacuolar(H+)-ATPase (V-ATPase), a multisubunit enzyme composed of a peripheral complex (V1) that hydrolyzes ATP and a membrane integral complex (V0) that translocates protons. V-ATPase is responsible for acidifying and maintaining the pH of intracellular compartments. The protein is V-type proton ATPase subunit G (vma-10) of Neurospora crassa (strain ATCC 24698 / 74-OR23-1A / CBS 708.71 / DSM 1257 / FGSC 987).